The primary structure comprises 94 residues: Evasin P1086 (94 aa).

The N-terminal stretch at 1-28 (MAFNVITFLQLAVFVVILFNINLHSASA) is a signal peptide. 3 disulfide bridges follow: Cys-48-Cys-67, Cys-52-Cys-69, and Cys-63-Cys-80. A glycan (N-linked (GlcNAc...) asparagine) is linked at Asn-74.

The protein resides in the secreted. Salivary chemokine-binding protein which binds to host chemokines CXCL1, CXCL2, CXCL3, CXCL5, CXCL6, CXCL10, CXCL12 and CXCL13. The protein is Evasin P1086 of Ixodes ricinus (Common tick).